The following is a 274-amino-acid chain: Large ribosomal subunit protein uL2 (274 aa).

The disordered stretch occupies residues 223 to 274 (VAMNPVDHPHGGGEGRTSGGRHPVTPWGVPTKGYKTRSNKRTDKYIVRRRTK).

Belongs to the universal ribosomal protein uL2 family. As to quaternary structure, part of the 50S ribosomal subunit. Forms a bridge to the 30S subunit in the 70S ribosome.

Its function is as follows. One of the primary rRNA binding proteins. Required for association of the 30S and 50S subunits to form the 70S ribosome, for tRNA binding and peptide bond formation. It has been suggested to have peptidyltransferase activity; this is somewhat controversial. Makes several contacts with the 16S rRNA in the 70S ribosome. The chain is Large ribosomal subunit protein uL2 from Shewanella amazonensis (strain ATCC BAA-1098 / SB2B).